A 155-amino-acid polypeptide reads, in one-letter code: SsrA-binding protein (155 aa).

It belongs to the SmpB family.

It is found in the cytoplasm. In terms of biological role, required for rescue of stalled ribosomes mediated by trans-translation. Binds to transfer-messenger RNA (tmRNA), required for stable association of tmRNA with ribosomes. tmRNA and SmpB together mimic tRNA shape, replacing the anticodon stem-loop with SmpB. tmRNA is encoded by the ssrA gene; the 2 termini fold to resemble tRNA(Ala) and it encodes a 'tag peptide', a short internal open reading frame. During trans-translation Ala-aminoacylated tmRNA acts like a tRNA, entering the A-site of stalled ribosomes, displacing the stalled mRNA. The ribosome then switches to translate the ORF on the tmRNA; the nascent peptide is terminated with the 'tag peptide' encoded by the tmRNA and targeted for degradation. The ribosome is freed to recommence translation, which seems to be the essential function of trans-translation. The polypeptide is SsrA-binding protein (Bacillus cereus (strain ATCC 10987 / NRS 248)).